The chain runs to 153 residues: MLNQLQSLTEYVGGNNALIDQWLQARKQLLVAYYHLVGIKPNKEALSLLDEEALDNFCQNLVDYLSTGHFHLYEKMLHEAATHSEQLLALSTQLDFALQSNTQQIMTFYDNHLATAIDHDNCLEFQQALSSVGETLEERFTLEDNMIRLVYDN.

It belongs to the Rsd/AlgQ family. Interacts with RpoD.

It localises to the cytoplasm. In terms of biological role, binds RpoD and negatively regulates RpoD-mediated transcription activation by preventing the interaction between the primary sigma factor RpoD with the catalytic core of the RNA polymerase and with promoter DNA. May be involved in replacement of the RNA polymerase sigma subunit from RpoD to RpoS during the transition from exponential growth to the stationary phase. This is Regulator of sigma D from Pectobacterium carotovorum subsp. carotovorum (strain PC1).